We begin with the raw amino-acid sequence, 237 residues long: Ribonuclease PH (237 aa).

Phosphate is bound by residues Arg-86 and 124–126 (GTR).

The protein belongs to the RNase PH family. Homohexameric ring arranged as a trimer of dimers.

The enzyme catalyses tRNA(n+1) + phosphate = tRNA(n) + a ribonucleoside 5'-diphosphate. In terms of biological role, phosphorolytic 3'-5' exoribonuclease that plays an important role in tRNA 3'-end maturation. Removes nucleotide residues following the 3'-CCA terminus of tRNAs; can also add nucleotides to the ends of RNA molecules by using nucleoside diphosphates as substrates, but this may not be physiologically important. Probably plays a role in initiation of 16S rRNA degradation (leading to ribosome degradation) during starvation. This chain is Ribonuclease PH, found in Methylorubrum populi (strain ATCC BAA-705 / NCIMB 13946 / BJ001) (Methylobacterium populi).